Reading from the N-terminus, the 441-residue chain is GTPase Der (441 aa).

EngA-type G domains are found at residues P4–I168 and I177–S352. GTP contacts are provided by residues G10–S17, D57–I61, N121–E124, G183–S190, D230–M234, and N295–D298. The region spanning T353–D437 is the KH-like domain.

The protein belongs to the TRAFAC class TrmE-Era-EngA-EngB-Septin-like GTPase superfamily. EngA (Der) GTPase family. Associates with the 50S ribosomal subunit.

In terms of biological role, GTPase that plays an essential role in the late steps of ribosome biogenesis. This chain is GTPase Der, found in Desulfitobacterium hafniense (strain Y51).